The chain runs to 151 residues: Transcriptional regulator MraZ (151 aa).

SpoVT-AbrB domains follow at residues 5-52 and 81-124; these read ANAI…PLPE and AVDL…DEDA.

It belongs to the MraZ family. Forms oligomers.

It localises to the cytoplasm. The protein resides in the nucleoid. This Pseudomonas aeruginosa (strain LESB58) protein is Transcriptional regulator MraZ.